Consider the following 505-residue polypeptide: Cell division control protein 6 homolog B (505 aa).

Positions 37–72 (KRKMRSDSAAVSGNSVSTPKKLKSHLPSSVPNPGMS) are disordered. Residues 45 to 54 (AAVSGNSVST) show a composition bias toward polar residues.

It belongs to the CDC6/cdc18 family.

Its subcellular location is the nucleus. Functionally, may be involved in the initiation of DNA replication. This Arabidopsis thaliana (Mouse-ear cress) protein is Cell division control protein 6 homolog B.